The sequence spans 474 residues: tRNA-2-methylthio-N(6)-dimethylallyladenosine synthase (474 aa).

The 118-residue stretch at 3-120 (KKLHIKTWGC…LPEMIEQIQR (118 aa)) folds into the MTTase N-terminal domain. [4Fe-4S] cluster contacts are provided by cysteine 12, cysteine 49, cysteine 83, cysteine 157, cysteine 161, and cysteine 164. Residues 143 to 375 (RADGPTAFVS…QDRITQQAMR (233 aa)) enclose the Radical SAM core domain. Positions 378-441 (RQMLGTVQRI…TNSLRGEFVR (64 aa)) constitute a TRAM domain.

This sequence belongs to the methylthiotransferase family. MiaB subfamily. Monomer. The cofactor is [4Fe-4S] cluster.

The protein resides in the cytoplasm. The catalysed reaction is N(6)-dimethylallyladenosine(37) in tRNA + (sulfur carrier)-SH + AH2 + 2 S-adenosyl-L-methionine = 2-methylsulfanyl-N(6)-dimethylallyladenosine(37) in tRNA + (sulfur carrier)-H + 5'-deoxyadenosine + L-methionine + A + S-adenosyl-L-homocysteine + 2 H(+). In terms of biological role, catalyzes the methylthiolation of N6-(dimethylallyl)adenosine (i(6)A), leading to the formation of 2-methylthio-N6-(dimethylallyl)adenosine (ms(2)i(6)A) at position 37 in tRNAs that read codons beginning with uridine. The sequence is that of tRNA-2-methylthio-N(6)-dimethylallyladenosine synthase from Shewanella frigidimarina (strain NCIMB 400).